Here is a 569-residue protein sequence, read N- to C-terminus: Probable pyruvate decarboxylase Pdc101 (569 aa).

Residues Asp-33 and His-120 each coordinate substrate. Ser-233 carries the post-translational modification Phosphoserine. A thiamine pyrophosphate binding region spans residues Asp-396–Ile-478. Mg(2+) is bound by residues Asp-446, Asn-473, and Gly-475. A substrate-binding site is contributed by Glu-479. Thr-521 carries the phosphothreonine modification. At Ser-522 the chain carries Phosphoserine.

It belongs to the TPP enzyme family. As to quaternary structure, homotetramer. It depends on a metal cation as a cofactor. Thiamine diphosphate is required as a cofactor.

It catalyses the reaction a 2-oxocarboxylate + H(+) = an aldehyde + CO2. This is Probable pyruvate decarboxylase Pdc101 (pdc101) from Schizosaccharomyces pombe (strain 972 / ATCC 24843) (Fission yeast).